The chain runs to 2813 residues: MKLNPQQAPLYGDCVVTVLLAEEDKAEDDVVFYLVFLGSTLRHCTSTRKVSSDTLETIAPGHDCCETVKVQLCASKEGLPVFVVAEEDFHFVQDEAYDAAQFLATSAGNQQALNFTRFLDQSGPPSGDVNSLDKKLVLAFRHLKLPTEWNVLGTDQSLHDAGPRETLMHFAVRLGLLRLTWFLLQKPGGRGALSIHNQEGATPVSLALERGYHKLHQLLTEENAGEPDSWSSLSYEIPYGDCSVRHHRELDIYTLTSESDSHHEHPFPGDGCTGPIFKLMNIQQQLMKTNLKQMDSLMPLMMTAQDPSSAPETDGQFLPCAPEPTDPQRLSSSEETESTQCCPGSPVAQTESPCDLSSIVEEENTDRSCRKKNKGVERKGEEVEPAPIVDSGTVSDQDSCLQSLPDCGVKGTEGLSSCGNRNEETGTKSSGMPTDQESLSSGDAVLQRDLVMEPGTAQYSSGGELGGISTTNVSTPDTAGEMEHGLMNPDATVWKNVLQGGESTKERFENSNIGTAGASDVHVTSKPVDKISVPNCAPAASSLDGNKPAESSLAFSNEETSTEKTAETETSRSREESADAPVDQNSVVIPAAAKDKISDGLEPYTLLAAGIGEAMSPSDLALLGLEEDVMPHQNSETNSSHAQSQKGKSSPICSTTGDDKLCADSACQQNTVTSSGDLVAKLCDNIVSESESTTARQPSSQDPPDASHCEDPQAHTVTSDPVRDTQERADFCPFKVVDNKGQRKDVKLDKPLTNMLEVVSHPHPVVPKMEKELVPDQAVISDSTFSLANSPGSESVTKDDALSFVPSQKEKGTATPELHTATDYRDGPDGNSNEPDTRPLEDRAVGLSTSSTAAELQHGMGNTSLTGLGGEHEGPAPPAIPEALNIKGNTDSSLQSVGKATLALDSVLTEEGKLLVVSESSAAQEQDKDKAVTCSSIKENALSSGTLQEEQRTPPPGQDTQQFHEKSISADCAKDKALQLSNSPGASSAFLKAETEHNKEVAPQVSLLTQGGAAQSLVPPGASLATESRQEALGAEHNSSALLPCLLPDGSDGSDALNCSQPSPLDVGVKNTQSQGKTSACEVSGDVTVDVTGVNALQGMAEPRRENISHNTQDILIPNVLLSQEKNAVLGLPVALQDKAVTDPQGVGTPEMIPLDWEKGKLEGADHSCTMGDAEEAQIDDEAHPVLLQPVAKELPTDMELSAHDDGAPAGVREVMRAPPSGRERSTPSLPCMVSAQDAPLPKGADLIEEAASRIVDAVIEQVKAAGALLTEGEACHMSLSSPELGPLTKGLESAFTEKVSTFPPGESLPMGSTPEEATGSLAGCFAGREEPEKIILPVQGPEPAAEMPDVKAEDEVDFRASSISEEVAVGSIAATLKMKQGPMTQAINRENWCTIEPCPDAASLLASKQSPECENFLDVGLGRECTSKQGVLKRESGSDSDLFHSPSDDMDSIIFPKPEEEHLACDITGSSSSTDDTASLDRHSSHGSDVSLSQILKPNRSRDRQSLDGFYSHGMGAEGRESESEPADPGDVEEEEMDSITEVPANCSVLRSSMRSLSPFRRHSWGPGKNAASDAEMNHRSSMRVLGDVVRRPPIHRRSFSLEGLTGGAGVGNKPSSSLEVSSANAEELRHPFSGEERVDSLVSLSEEDLESDQREHRMFDQQICHRSKQQGFNYCTSAISSPLTKSISLMTISHPGLDNSRPFHSTFHNTSANLTESITEENYNFLPHSPSKKDSEWKSGTKVSRTFSYIKNKMSSSKKSKEKEKEKDKIKEKEKDSKDKEKDKKTVNGHTFSSIPVVGPISCSQCMKPFTNKDAYTCANCSAFVHKGCRESLASCAKVKMKQPKGSLQAHDTSSLPTVIMRNKPSQPKERPRSAVLLVDETATTPIFANRRSQQSVSLSKSVSIQNITGVGNDENMSNTWKFLSHSTDSLNKISKVNESTESLTDEGVGTDMNEGQLLGDFEIESKQLEAESWSRIIDSKFLKQQKKDVVKRQEVIYELMQTEFHHVRTLKIMSGVYSQGMMADLLFEQQMVEKLFPCLDELISIHSQFFQRILERKKESLVDKSEKNFLIKRIGDVLVNQFSGENAERLKKTYGKFCGQHNQSVNYFKDLYAKDKRFQAFVKKKMSSSVVRRLGIPECILLVTQRITKYPVLFQRILQCTKDNEVEQEDLAQSLSLVKDVIGAVDSKVASYEKKVRLNEIYTKTDSKSIMRMKSGQMFAKEDLKRKKLVRDGSVFLKNAAGRLKEVQAVLLTDILVFLQEKDQKYIFASLDQKSTVISLKKLIVREVAHEEKGLFLISMGMTDPEMVEVHASSKEERNSWIQIIQDTINTLNRDEDEGIPSENEEEKKMLDTRARELKEQLHQKDQKILLLLEEKEMIFRDMAECSTPLPEDCSPTHSPRVLFRSNTEEALKGGPLMKSAINEVEILQGLVSGNLGGTLGPTVSSPIEQDVVGPVSLPRRAETFGGFDSHQMNASKGGEKEEGDDGQDLRRTESDSGLKKGGNANLVFMLKRNSEQVVQSVVHLYELLSALQGVVLQQDSYIEDQKLVLSERALTRSLSRPSSLIEQEKQRSLEKQRQDLANLQKQQAQYLEEKRRREREWEARERELREREALLAQREEEVQQGQQDLEKEREELQQKKGTYQYDLERLRAAQKQLEREQEQLRREAERLSQRQTERDLCQVSHPHTKLMRIPSFFPSPEEPPSPSAPSIAKSGSLDSELSVSPKRNSISRTHKDKGPFHILSSTSQTNKGPEGQSQAPASTSASTRLFGLTKPKEKKEKKKKNKTSRSQPGDGPASEVSAEGEEIFC.

Disordered stretches follow at residues A304–C400 and L415–L439. Over residues T427–L439 the composition is skewed to polar residues. Residues W494–A516 form an important for interaction with PRKAR2A region. Disordered regions lie at residues A539–N585, H632–C653, and S690–Q726. Residues S561–S577 are compositionally biased toward basic and acidic residues. Polar residues predominate over residues S690–D702. A Phosphoserine modification is found at S790. Disordered regions lie at residues V805 to L856 and E939 to E965. Residue T815 is modified to Phosphothreonine. The segment covering P835–A844 has biased composition (basic and acidic residues). 2 stretches are compositionally biased toward polar residues: residues L847–L856 and E939–Q948. T953 is subject to Phosphothreonine. At S983 the chain carries Phosphoserine. Disordered stretches follow at residues G1431 to I1455 and D1467 to T1542. The span at D1467–T1478 shows a compositional bias: low complexity. Residues G1488–L1497 are compositionally biased toward polar residues. Residues S1489, S1507, S1540, S1565, and S1602 each carry the phosphoserine modification. Acidic residues predominate over residues S1525–S1540. The segment at R1585–N1715 is important for interaction with MAP2K3. Residues F1601–E1638 are disordered. A compositionally biased stretch (polar residues) spans K1615–N1626. The segment covering E1628–E1638 has biased composition (basic and acidic residues). A phosphoserine mark is found at S1642, S1645, and S1647. An N6-methyllysine modification is found at K1670. Residues K1755–T1793 form a disordered region. The stretch at S1758–N1790 forms a coiled coil. Basic and acidic residues predominate over residues K1761–T1788. A Phorbol-ester/DAG-type zinc finger spans residues G1791–C1838. S1876, S1895, and S1929 each carry phosphoserine. The segment at M1919 to C2813 is interaction with ESR1. The residue at position 1930 (T1930) is a Phosphothreonine. 2 positions are modified to phosphoserine: S1932 and S1945. The DH domain maps to K1994–K2191. Residues K2231–N2333 form the PH domain. 2 positions are modified to phosphoserine: S2345 and S2398. The stretch at S2345–M2381 forms a coiled coil. The segment at E2466–L2502 is disordered. A Phosphothreonine modification is found at T2467. Phosphoserine is present on S2473. A compositionally biased stretch (basic and acidic residues) spans Q2491–L2502. Phosphoserine occurs at positions 2563 and 2566. The stretch at L2568–D2683 forms a coiled coil. Basic and acidic residues predominate over residues Q2665–L2684. The tract at residues Q2665–C2813 is disordered. A phosphoserine mark is found at S2703, S2709, and S2728. Over residues S2720–S2735 the composition is skewed to polar residues. The segment covering Q2760–T2771 has biased composition (low complexity).

As to quaternary structure, interacts with the cAMP-dependent protein kinase (PKA) holoenzyme and with the regulatory subunit PRKAR2A. Interacts with RHOA. Also interacts with RHOB and RHOC. Identified in a ternary complex with RHOA and PRKAR2A. Identified in a complex with NR3C1 and RHOA. Interacts with BRAF and KSR1. Identified in a complex with BRAF and KSR1. Component of a signaling complex containing at least AKAP13, PKN1, MAPK14, ZAK and MAP2K3. Within this complex, AKAP13 interacts directly with PKN1, which in turn recruits MAPK14, MAP2K3 and ZAK. Interacts (phosphorylated form) with YWHAB and YWHAZ. Interaction with YWHAB inhibits activation of RHOA, interferes with PKN1 binding and activation of MAP kinases. Interacts with GNA12. Interacts with IKBKB. Interacts with ESR1, THRA, PPARA and NME2. Interacts (via the C-terminal domain after the PH domain) with MEF2C and RXRB. Interacts (via the C-terminal domain after the PH domain) with PRKD1. As to expression, detected in mammary gland. Detected in heart (at protein level). Expressed as a 5.3 kb transcript in hematopoietic cells, skeletal muscle, lung, heart, estrogen-responsive reproductive tissues, including breast ductal epithelium. Also found in testis and breast cancer cell lines. Predominantly expressed as a 10 kb transcript in the heart and at lower levels in the lung, placenta, kidney, pancreas, skeletal muscle and liver. Transcripts of between 6-9 kb are also expressed in myeloid and lymphoid lineages, a variety of epithelial tissues, and in skeletal muscle.

The protein localises to the cytoplasm. It is found in the cytosol. It localises to the cell cortex. The protein resides in the nucleus. Its subcellular location is the membrane. In terms of biological role, scaffold protein that plays an important role in assembling signaling complexes downstream of several types of G protein-coupled receptors. Activates RHOA in response to signaling via G protein-coupled receptors via its function as Rho guanine nucleotide exchange factor. May also activate other Rho family members. Part of a kinase signaling complex that links ADRA1A and ADRA1B adrenergic receptor signaling to the activation of downstream p38 MAP kinases, such as MAPK11 and MAPK14. Part of a signaling complex that links ADRA1B signaling to the activation of RHOA and IKBKB/IKKB, leading to increased NF-kappa-B transcriptional activity. Part of a RHOA-dependent signaling cascade that mediates responses to lysophosphatidic acid (LPA), a signaling molecule that activates G-protein coupled receptors and potentiates transcriptional activation of the glucocorticoid receptor NR3C1. Part of a signaling cascade that stimulates MEF2C-dependent gene expression in response to lysophosphatidic acid (LPA). Part of a signaling pathway that activates MAPK11 and/or MAPK14 and leads to increased transcription activation of the estrogen receptors ESR1 and ESR2. Part of a signaling cascade that links cAMP and EGFR signaling to BRAF signaling and to PKA-mediated phosphorylation of KSR1, leading to the activation of downstream MAP kinases, such as MAPK1 or MAPK3. Functions as a scaffold protein that anchors cAMP-dependent protein kinase (PKA) and PRKD1. This promotes activation of PRKD1, leading to increased phosphorylation of HDAC5 and ultimately cardiomyocyte hypertrophy. Has no guanine nucleotide exchange activity on CDC42, Ras or Rac. Required for normal embryonic heart development, and in particular for normal sarcomere formation in the developing cardiomyocytes. Plays a role in cardiomyocyte growth and cardiac hypertrophy in response to activation of the beta-adrenergic receptor by phenylephrine or isoproterenol. Required for normal adaptive cardiac hypertrophy in response to pressure overload. Plays a role in osteogenesis. In Homo sapiens (Human), this protein is A-kinase anchor protein 13 (AKAP13).